Here is a 358-residue protein sequence, read N- to C-terminus: MATDDDSFPWDQDSILSRDLLSASSLQLCYENLNRSCVRSPYSPGSRLILYAVFGFGAVLAVCGNLLVMTSILHFRQLHSPANFLVASLACADLLVGLTVMPFSMVRSVEGCWYFGNTYCKFHSCFEGSFCYSSLFHLCFISLDRYIAVSDPLIYPTRFTASISGKCITFSWLLSIIYSFSLLYTGANEAGLEDLVSALTCVGGCQVAVNQSWVFINFLLFLVPALVMMTVYSKIFLIAKQQAQNIEKMSKQTARASESYKDRVAKRERKAAKTLGIAVAAFLLSWLPYFIDSIIDAFLGFITPTYMYEILVWIVYYNSAMNPLIYAFFYPWFRKAIKLIVTGKILRENSSTINLFPE.

Residues 1 to 47 (MATDDDSFPWDQDSILSRDLLSASSLQLCYENLNRSCVRSPYSPGSR) are Extracellular-facing. A glycan (N-linked (GlcNAc...) asparagine) is linked at N34. Cystine bridges form between C37/C201 and C120/C205. The chain crosses the membrane as a helical span at residues 48 to 68 (LILYAVFGFGAVLAVCGNLLV). The Cytoplasmic portion of the chain corresponds to 69–83 (MTSILHFRQLHSPAN). A helical transmembrane segment spans residues 84–104 (FLVASLACADLLVGLTVMPFS). At 105-125 (MVRSVEGCWYFGNTYCKFHSC) the chain is on the extracellular side. Residues 126–148 (FEGSFCYSSLFHLCFISLDRYIA) traverse the membrane as a helical segment. The Cytoplasmic portion of the chain corresponds to 149-166 (VSDPLIYPTRFTASISGK). A helical transmembrane segment spans residues 167 to 187 (CITFSWLLSIIYSFSLLYTGA). Over 188–211 (NEAGLEDLVSALTCVGGCQVAVNQ) the chain is Extracellular. A helical membrane pass occupies residues 212-232 (SWVFINFLLFLVPALVMMTVY). The Cytoplasmic segment spans residues 233-274 (SKIFLIAKQQAQNIEKMSKQTARASESYKDRVAKRERKAAKT). A helical membrane pass occupies residues 275-295 (LGIAVAAFLLSWLPYFIDSII). Residues 296–309 (DAFLGFITPTYMYE) are Extracellular-facing. Residues 310–332 (ILVWIVYYNSAMNPLIYAFFYPW) form a helical membrane-spanning segment. Residues 333-358 (FRKAIKLIVTGKILRENSSTINLFPE) are Cytoplasmic-facing.

It belongs to the G-protein coupled receptor 1 family.

It localises to the cell membrane. Functionally, olfactory receptor specific for N,N-dimethylalkylamines trace amines. Trace amine compounds are enriched in animal body fluids and act on trace amine-associated receptors (TAARs) to elicit both intraspecific and interspecific innate behaviors. Ligand-binding causes a conformation change that triggers signaling via G(s)-class of G alpha proteins (GNAL or GNAS). This is Trace amine-associated receptor 7c from Rattus norvegicus (Rat).